The primary structure comprises 259 residues: MNNLSLANEKTKIQVRGLEFFYNNQKSLKSIDMTIPEKRITAIIGPSGCGKSTLLRVFNRIYAMYPKQEARGEVLLNGENILAPGYSMNRLRSHVGMVFQKPVPFPMSIYDNISYAIKHHEKLSRREMEDRVEQALRGAALWDEVKDKLKQSATGLSGGQQQRLCIARTIALRPQVLLLDEPTSALDPISTGRIEQLITELKEQFTVIIVTHNMQQAARCSDYTAFMFMGELIEHGDTDTIFTKPSKTQTEDYITGRFG.

The ABC transporter domain occupies 13–254 (IQVRGLEFFY…PSKTQTEDYI (242 aa)). 45 to 52 (GPSGCGKS) lines the ATP pocket.

It belongs to the ABC transporter superfamily. Phosphate importer (TC 3.A.1.7) family. The complex is composed of two ATP-binding proteins (PstB), two transmembrane proteins (PstC and PstA) and a solute-binding protein (PstS).

It is found in the cell inner membrane. The catalysed reaction is phosphate(out) + ATP + H2O = ADP + 2 phosphate(in) + H(+). In terms of biological role, part of the ABC transporter complex PstSACB involved in phosphate import. Responsible for energy coupling to the transport system. The sequence is that of Phosphate import ATP-binding protein PstB 1 from Pseudomonas syringae pv. tomato (strain ATCC BAA-871 / DC3000).